The chain runs to 94 residues: Aspartyl/glutamyl-tRNA(Asn/Gln) amidotransferase subunit C (94 aa).

This sequence belongs to the GatC family. Heterotrimer of A, B and C subunits.

The catalysed reaction is L-glutamyl-tRNA(Gln) + L-glutamine + ATP + H2O = L-glutaminyl-tRNA(Gln) + L-glutamate + ADP + phosphate + H(+). It catalyses the reaction L-aspartyl-tRNA(Asn) + L-glutamine + ATP + H2O = L-asparaginyl-tRNA(Asn) + L-glutamate + ADP + phosphate + 2 H(+). Allows the formation of correctly charged Asn-tRNA(Asn) or Gln-tRNA(Gln) through the transamidation of misacylated Asp-tRNA(Asn) or Glu-tRNA(Gln) in organisms which lack either or both of asparaginyl-tRNA or glutaminyl-tRNA synthetases. The reaction takes place in the presence of glutamine and ATP through an activated phospho-Asp-tRNA(Asn) or phospho-Glu-tRNA(Gln). The protein is Aspartyl/glutamyl-tRNA(Asn/Gln) amidotransferase subunit C of Hydrogenobaculum sp. (strain Y04AAS1).